Reading from the N-terminus, the 223-residue chain is Ribose-5-phosphate isomerase A (223 aa).

Residues 29–32 (TGST), 82–85 (DGAD), and 95–98 (KGGG) each bind substrate. Glutamate 104 acts as the Proton acceptor in catalysis. Position 122 (lysine 122) interacts with substrate.

It belongs to the ribose 5-phosphate isomerase family. Homodimer.

The enzyme catalyses aldehydo-D-ribose 5-phosphate = D-ribulose 5-phosphate. It functions in the pathway carbohydrate degradation; pentose phosphate pathway; D-ribose 5-phosphate from D-ribulose 5-phosphate (non-oxidative stage): step 1/1. Functionally, catalyzes the reversible conversion of ribose-5-phosphate to ribulose 5-phosphate. The sequence is that of Ribose-5-phosphate isomerase A from Neisseria meningitidis serogroup C / serotype 2a (strain ATCC 700532 / DSM 15464 / FAM18).